The sequence spans 201 residues: Dephospho-CoA kinase (201 aa).

The 196-residue stretch at 6–201 (VMGLTGSIGM…RAIREKNPRG (196 aa)) folds into the DPCK domain. 14–19 (GMGKSA) is a binding site for ATP.

This sequence belongs to the CoaE family.

It is found in the cytoplasm. It carries out the reaction 3'-dephospho-CoA + ATP = ADP + CoA + H(+). It functions in the pathway cofactor biosynthesis; coenzyme A biosynthesis; CoA from (R)-pantothenate: step 5/5. Catalyzes the phosphorylation of the 3'-hydroxyl group of dephosphocoenzyme A to form coenzyme A. This chain is Dephospho-CoA kinase, found in Novosphingobium aromaticivorans (strain ATCC 700278 / DSM 12444 / CCUG 56034 / CIP 105152 / NBRC 16084 / F199).